The sequence spans 143 residues: Large ribosomal subunit protein uL16 (143 aa).

A disordered region spans residues 1–26; it reads MSMALLPRRVKYRKSQRGSRKGNATR. The segment covering 8–20 has biased composition (basic residues); that stretch reads RRVKYRKSQRGSR.

Belongs to the universal ribosomal protein uL16 family. In terms of assembly, part of the 50S ribosomal subunit.

Its function is as follows. Binds 23S rRNA and is also seen to make contacts with the A and possibly P site tRNAs. This is Large ribosomal subunit protein uL16 from Methylacidiphilum infernorum (isolate V4) (Methylokorus infernorum (strain V4)).